Here is a 204-residue protein sequence, read N- to C-terminus: ATP-dependent Clp protease proteolytic subunit (204 aa).

Ser101 serves as the catalytic Nucleophile. His126 is a catalytic residue.

This sequence belongs to the peptidase S14 family. Component of the chloroplastic Clp protease core complex.

Its subcellular location is the plastid. The protein resides in the chloroplast stroma. It carries out the reaction Hydrolysis of proteins to small peptides in the presence of ATP and magnesium. alpha-casein is the usual test substrate. In the absence of ATP, only oligopeptides shorter than five residues are hydrolyzed (such as succinyl-Leu-Tyr-|-NHMec, and Leu-Tyr-Leu-|-Tyr-Trp, in which cleavage of the -Tyr-|-Leu- and -Tyr-|-Trp bonds also occurs).. Its function is as follows. Cleaves peptides in various proteins in a process that requires ATP hydrolysis. Has a chymotrypsin-like activity. Plays a major role in the degradation of misfolded proteins. The sequence is that of ATP-dependent Clp protease proteolytic subunit from Phalaenopsis aphrodite subsp. formosana (Moth orchid).